Consider the following 281-residue polypeptide: Carbonic anhydrase (281 aa).

3 residues coordinate Zn(2+): Cys106, His161, and Cys164.

This sequence belongs to the beta-class carbonic anhydrase family. Requires Zn(2+) as cofactor.

Its subcellular location is the cytoplasm. The protein resides in the nucleus. It is found in the mitochondrion intermembrane space. It carries out the reaction hydrogencarbonate + H(+) = CO2 + H2O. Its activity is regulated as follows. Amines and amino acids act as activators of catalytic activity, whereas natural product-based phenols, dithiocarbamates, aliphatic and aromatic carboxylates, boronic acids, and sulfonamides act as inhibitors of enzymatic activity. Also inhibited by anions such as cyanide and carbonate, and to a lesser extent by sulfate, phenylboronic, and phenyl arsonic acid. Catalyzes the reversible hydration of CO(2) to H(2)CO(3). The main role may be to provide inorganic carbon for the bicarbonate-dependent carboxylation reactions catalyzed by pyruvate carboxylase, acetyl-CoA carboxylase and carbamoyl-phosphate synthetase. Involved in protection against oxidative damage. Acts as a CO(2) chemosensor and induces CO(2)-mediated filamentation. Essential for pathological growth in niches where sufficient CO(2) is not supplied by the host. Necessary for white-to-opaque switching at low CO(2) concentrations. The sequence is that of Carbonic anhydrase (NCE103) from Candida albicans (strain SC5314 / ATCC MYA-2876) (Yeast).